We begin with the raw amino-acid sequence, 938 residues long: Scm-like with four MBT domains protein 2 (938 aa).

The tract at residues 1–32 (MERYLPVSKKRNSSSSLEKITGSANGNGTLYS) is disordered. The span at 13–30 (SSSSLEKITGSANGNGTL) shows a compositional bias: polar residues. MBT repeat units lie at residues 43–143 (FSWG…LRPP), 151–255 (SDWT…MDPP), 265–371 (FEWK…LAPP), and 379–475 (FNWV…LTTP). Residues 742–836 (PEGIPESLPE…TVPTTASSNN (95 aa)) form a disordered region. Composition is skewed to basic and acidic residues over residues 765-777 (TEQE…DTAR) and 809-822 (RNSE…VERA). An SAM domain is found at 868–931 (WSVTDVVRFI…CHQIERVKVA (64 aa)).

In terms of assembly, interacts with YY1. Interacts with methylated histones H3K9me2 and H4K20me2. In terms of tissue distribution, expressed in testis and, at much lower levels, in ovary.

The protein resides in the nucleus. In terms of biological role, transcriptional repressor of HOXB13 gene. This chain is Scm-like with four MBT domains protein 2 (Sfmbt2), found in Mus musculus (Mouse).